The sequence spans 378 residues: tRNA-specific 2-thiouridylase MnmA (378 aa).

ATP is bound by residues 12–19 and M38; that span reads GLSGGVDS. The segment at 98-100 is interaction with target base in tRNA; the sequence is NPD. The active-site Nucleophile is the C103. An intrachain disulfide couples C103 to C201. Residue G127 participates in ATP binding. The tract at residues 151 to 153 is interaction with tRNA; it reads KDQ. Catalysis depends on C201, which acts as the Cysteine persulfide intermediate. Residues 319–320 form an interaction with tRNA region; sequence RY.

It belongs to the MnmA/TRMU family.

The protein localises to the cytoplasm. It catalyses the reaction S-sulfanyl-L-cysteinyl-[protein] + uridine(34) in tRNA + AH2 + ATP = 2-thiouridine(34) in tRNA + L-cysteinyl-[protein] + A + AMP + diphosphate + H(+). In terms of biological role, catalyzes the 2-thiolation of uridine at the wobble position (U34) of tRNA, leading to the formation of s(2)U34. In Paracidovorax citrulli (strain AAC00-1) (Acidovorax citrulli), this protein is tRNA-specific 2-thiouridylase MnmA.